A 191-amino-acid polypeptide reads, in one-letter code: uncharacterized protein (191 aa).

The signal sequence occupies residues 1–17 (MESIILSIAIFIGVLLG). The tract at residues 82–148 (TFSGSRTSPD…DVGAGSGSSI (67 aa)) is disordered. Residues 168–188 (VAVLITAAILSAPVTAIALLE) form a helical membrane-spanning segment.

It localises to the membrane. This is an uncharacterized protein from Saccharomyces cerevisiae (strain ATCC 204508 / S288c) (Baker's yeast).